The sequence spans 389 residues: NAD-dependent protein deacetylase sirtuin-2 (389 aa).

The disordered stretch occupies residues 1 to 34 (MAEPDPSHPLETQAGKVQEAQDSDSDSEGGAAGG). Residue A2 is modified to N-acetylalanine. Residues S23, S25, S27, and S53 each carry the phosphoserine modification. One can recognise a Deacetylase sirtuin-type domain in the interval 57–338 (RLLDELTLEG…LALAELLGWK (282 aa)). Residues 85–89 (AGIST) and 95–97 (DFR) each bind NAD(+). Residue S100 is modified to Phosphoserine. 167–170 (QNID) provides a ligand contact to NAD(+). The active-site Proton acceptor is H187. Zn(2+) is bound by residues C195 and C200. S207 carries the phosphoserine modification. Zn(2+)-binding residues include C221 and C224. Residues 262 to 263 (TS), 286 to 288 (NKE), and C324 each bind NAD(+). Residues 350-389 (ASIDAQSGAEAPNPSTSASPRKSPPPAQDEARTTEREKPQ) form a disordered region. Phosphoserine occurs at positions 368 and 372. Residues 378 to 389 (DEARTTEREKPQ) show a composition bias toward basic and acidic residues.

This sequence belongs to the sirtuin family. Class I subfamily. Interacts with CDC20, FOXO3 and FZR1. Associates with microtubules in primary cortical mature neurons. Homotrimer. Interacts (via both phosphorylated, unphosphorylated, active or inactive forms) with HDAC6; the interaction is necessary for the complex to interact with alpha-tubulin, suggesting that these proteins belong to a large complex that deacetylates the cytoskeleton. Interacts with FOXO1; the interaction is disrupted upon serum-starvation or oxidative stress, leading to increased level of acetylated FOXO1 and induction of autophagy. Interacts with RELA; the interaction occurs in the cytoplasm and is increased in a TNF-alpha-dependent manner. Interacts with HOXA10; the interaction is direct. Interacts with YWHAB and YWHAG; the interactions occur in a AKT-dependent manner and increase SIRT2-dependent TP53 deacetylation. Interacts with MAPK1/ERK2 and MAPK3/ERK1; the interactions increase SIRT2 stability and deacetylation activity. Interacts (phosphorylated form) with KMT5A isoform 2; the interaction is direct, stimulates KMT5A-mediated methyltransferase activity on histone at 'Lys-20' (H4K20me1) and is increased in a H(2)O(2)-induced oxidative stress-dependent manner. Interacts with G6PD; the interaction is enhanced by H(2)O(2) treatment. Interacts with a G1/S-specific cyclin E-CDK2 complex. Interacts with AURKA, CDK5R1 (p35 form) and CDK5 and HIF1A. Interacts with the tRNA ligase SARS1; recruited to the VEGFA promoter via interaction with SARS1. Interacts with BEX4; negatively regulates alpha-tubulin deacetylation by SIRT2. It depends on Zn(2+) as a cofactor. Phosphorylated at phosphoserine and phosphothreonine. Phosphorylated at Ser-368 by a mitotic kinase CDK1/cyclin B at the G2/M transition; phosphorylation regulates the delay in cell-cycle progression. Phosphorylated at Ser-368 by a mitotic kinase G1/S-specific cyclin E/Cdk2 complex; phosphorylation inactivates SIRT2-mediated alpha-tubulin deacetylation and thereby negatively regulates cell adhesion, cell migration and neurite outgrowth during neuronal differentiation. Phosphorylated by cyclin A/Cdk2 and p35-Cdk5 complexes and to a lesser extent by the cyclin D3/Cdk4 and cyclin B/Cdk1, in vitro. Dephosphorylated at Ser-368 by CDC14A and CDC14B around early anaphase. In terms of processing, acetylated by EP300; acetylation leads both to the decreased of SIRT2-mediated alpha-tubulin deacetylase activity and SIRT2-mediated down-regulation of TP53 transcriptional activity. Post-translationally, ubiquitinated.

Its subcellular location is the nucleus. The protein localises to the cytoplasm. It localises to the perinuclear region. The protein resides in the cytoskeleton. It is found in the microtubule organizing center. Its subcellular location is the centrosome. The protein localises to the centriole. It localises to the spindle. The protein resides in the midbody. It is found in the chromosome. Its subcellular location is the perikaryon. The protein localises to the cell projection. It localises to the growth cone. The protein resides in the myelin membrane. The catalysed reaction is N(6)-acetyl-L-lysyl-[protein] + NAD(+) + H2O = 2''-O-acetyl-ADP-D-ribose + nicotinamide + L-lysyl-[protein]. It carries out the reaction N(6)-tetradecanoyl-L-lysyl-[protein] + NAD(+) + H2O = 2''-O-tetradecanoyl-ADP-D-ribose + nicotinamide + L-lysyl-[protein]. It catalyses the reaction N(6)-hexadecanoyl-L-lysyl-[protein] + NAD(+) + H2O = 2''-O-hexadecanoyl-ADP-D-ribose + nicotinamide + L-lysyl-[protein]. Its activity is regulated as follows. Inhibited by Sirtinol, A3 and M15 small molecules. Inhibited by nicotinamide. In terms of biological role, NAD-dependent protein deacetylase, which deacetylates internal lysines on histone and alpha-tubulin as well as many other proteins such as key transcription factors. Participates in the modulation of multiple and diverse biological processes such as cell cycle control, genomic integrity, microtubule dynamics, cell differentiation, metabolic networks, and autophagy. Plays a major role in the control of cell cycle progression and genomic stability. Functions in the antephase checkpoint preventing precocious mitotic entry in response to microtubule stress agents, and hence allowing proper inheritance of chromosomes. Positively regulates the anaphase promoting complex/cyclosome (APC/C) ubiquitin ligase complex activity by deacetylating CDC20 and FZR1, then allowing progression through mitosis. Associates both with chromatin at transcriptional start sites (TSSs) and enhancers of active genes. Plays a role in cell cycle and chromatin compaction through epigenetic modulation of the regulation of histone H4 'Lys-20' methylation (H4K20me1) during early mitosis. Specifically deacetylates histone H4 at 'Lys-16' (H4K16ac) between the G2/M transition and metaphase enabling H4K20me1 deposition by KMT5A leading to ulterior levels of H4K20me2 and H4K20me3 deposition throughout cell cycle, and mitotic S-phase progression. Deacetylates KMT5A modulating KMT5A chromatin localization during the mitotic stress response. Also deacetylates histone H3 at 'Lys-57' (H3K56ac) during the mitotic G2/M transition. During oocyte meiosis progression, may deacetylate histone H4 at 'Lys-16' (H4K16ac) and alpha-tubulin, regulating spindle assembly and chromosome alignment by influencing microtubule dynamics and kinetochore function. Deacetylates histone H4 at 'Lys-16' (H4K16ac) at the VEGFA promoter and thereby contributes to regulate expression of VEGFA, a key regulator of angiogenesis. Deacetylates alpha-tubulin at 'Lys-40' and hence controls neuronal motility, oligodendroglial cell arbor projection processes and proliferation of non-neuronal cells. Phosphorylation at Ser-368 by a G1/S-specific cyclin E-CDK2 complex inactivates SIRT2-mediated alpha-tubulin deacetylation, negatively regulating cell adhesion, cell migration and neurite outgrowth during neuronal differentiation. Deacetylates PARD3 and participates in the regulation of Schwann cell peripheral myelination formation during early postnatal development and during postinjury remyelination. Involved in several cellular metabolic pathways. Plays a role in the regulation of blood glucose homeostasis by deacetylating and stabilizing phosphoenolpyruvate carboxykinase PCK1 activity in response to low nutrient availability. Acts as a key regulator in the pentose phosphate pathway (PPP) by deacetylating and activating the glucose-6-phosphate G6PD enzyme, and therefore, stimulates the production of cytosolic NADPH to counteract oxidative damage. Maintains energy homeostasis in response to nutrient deprivation as well as energy expenditure by inhibiting adipogenesis and promoting lipolysis. Attenuates adipocyte differentiation by deacetylating and promoting FOXO1 interaction to PPARG and subsequent repression of PPARG-dependent transcriptional activity. Plays a role in the regulation of lysosome-mediated degradation of protein aggregates by autophagy in neuronal cells. Deacetylates FOXO1 in response to oxidative stress or serum deprivation, thereby negatively regulating FOXO1-mediated autophagy. Deacetylates a broad range of transcription factors and co-regulators regulating target gene expression. Deacetylates transcriptional factor FOXO3 stimulating the ubiquitin ligase SCF(SKP2)-mediated FOXO3 ubiquitination and degradation. Deacetylates HIF1A and therefore promotes HIF1A degradation and inhibition of HIF1A transcriptional activity in tumor cells in response to hypoxia. Deacetylates RELA in the cytoplasm inhibiting NF-kappaB-dependent transcription activation upon TNF-alpha stimulation. Inhibits transcriptional activation by deacetylating p53/TP53 and EP300. Also deacetylates EIF5A. Functions as a negative regulator on oxidative stress-tolerance in response to anoxia-reoxygenation conditions. Plays a role as tumor suppressor. In addition to protein deacetylase activity, also has activity toward long-chain fatty acyl groups and mediates protein-lysine demyristoylation and depalmitoylation of target proteins, such as ARF6 and KRAS, thereby regulating their association with membranes. The polypeptide is NAD-dependent protein deacetylase sirtuin-2 (SIRT2) (Macaca fascicularis (Crab-eating macaque)).